The following is a 250-amino-acid chain: Small ribosomal subunit protein uS2 (250 aa).

It belongs to the universal ribosomal protein uS2 family.

This chain is Small ribosomal subunit protein uS2, found in Variovorax paradoxus (strain S110).